The chain runs to 342 residues: tRNA dimethylallyltransferase (342 aa).

39–46 is an ATP binding site; it reads GPTGSGKT. Residue 41–46 participates in substrate binding; sequence TGSGKT. An interaction with substrate tRNA region spans residues 64-67; that stretch reads DSMQ.

It belongs to the IPP transferase family. In terms of assembly, monomer. Requires Mg(2+) as cofactor.

It catalyses the reaction adenosine(37) in tRNA + dimethylallyl diphosphate = N(6)-dimethylallyladenosine(37) in tRNA + diphosphate. Catalyzes the transfer of a dimethylallyl group onto the adenine at position 37 in tRNAs that read codons beginning with uridine, leading to the formation of N6-(dimethylallyl)adenosine (i(6)A). The protein is tRNA dimethylallyltransferase of Chlamydia felis (strain Fe/C-56) (Chlamydophila felis).